Consider the following 53-residue polypeptide: Mannose/glucose-specific lectin alpha 1 chain (53 aa).

Belongs to the leguminous lectin family. Tetramer of two alpha and two beta chains.

This chain is Mannose/glucose-specific lectin alpha 1 chain, found in Lathyrus ochrus (Cyprus-vetch).